Reading from the N-terminus, the 281-residue chain is Thioesterase PikA5 (281 aa).

Residues R26–D249 form a thioesterase region. S99 (nucleophile; for thioesterase activity) is an active-site residue. Catalysis depends on H233, which acts as the Proton acceptor; for thioesterase activity.

It belongs to the thioesterase family.

It participates in antibiotic biosynthesis. In terms of biological role, involved in the biosynthesis of 12- and 14-membered ring macrolactone antibiotics such as methymycin, neomethymycin, narbomycin and pikromycin. Responsible for removing mis-formed acyl moieties (aberrant decarboxylation) that are bound to the PKS and could block it. Catalyzes the cleavage of methylmalonyl-[acp]. It exhibits some acyl-group specificity, and catalyzes the cleavage of propionyl and butyryl derivatives faster than acetyl malonyl or methylmalonyl derivatives. In Streptomyces venezuelae, this protein is Thioesterase PikA5.